Here is a 142-residue protein sequence, read N- to C-terminus: MTTPSMEDYIEQIYMLIEEKGYARVSDIAEALAVHPSSVTKMVQKLDKDEYLIYEKYRGLVLTSKGKKIGKRLVYRHELLEQFLRIIGVDEEKIYNDVEGIEHHLSWNSIDRIGDLVQYFEDDESRKKELKSVQKKTENPGE.

The region spanning 1 to 63 (MTTPSMEDYI…YEKYRGLVLT (63 aa)) is the HTH dtxR-type domain. Residues aspartate 8, glutamate 11, histidine 77, glutamate 99, glutamate 102, and histidine 103 each contribute to the Mn(2+) site.

The protein belongs to the DtxR/MntR family. As to quaternary structure, homodimer.

The protein localises to the cytoplasm. DNA binding is strongly activated by Mn(2+). Central regulator of manganese homeostasis. The chain is HTH-type transcriptional regulator MntR from Bacillus velezensis (strain DSM 23117 / BGSC 10A6 / LMG 26770 / FZB42) (Bacillus amyloliquefaciens subsp. plantarum).